Reading from the N-terminus, the 160-residue chain is Cytochrome b6-f complex subunit 4 (160 aa).

3 helical membrane passes run 36–56 (LLYI…GLSV), 95–115 (LLGV…PFIE), and 131–151 (TVFL…TFPI).

Belongs to the cytochrome b family. PetD subfamily. The 4 large subunits of the cytochrome b6-f complex are cytochrome b6, subunit IV (17 kDa polypeptide, petD), cytochrome f and the Rieske protein, while the 4 small subunits are petG, petL, petM and petN. The complex functions as a dimer.

The protein localises to the plastid. The protein resides in the chloroplast thylakoid membrane. Functionally, component of the cytochrome b6-f complex, which mediates electron transfer between photosystem II (PSII) and photosystem I (PSI), cyclic electron flow around PSI, and state transitions. This chain is Cytochrome b6-f complex subunit 4, found in Stigeoclonium helveticum (Green alga).